The chain runs to 617 residues: MKIHFRDLVSGLVKEIDEIEKSDRAQGDKTRRYQGAARKFKNAVFMDKRKYRGNGMKNRISLTTFNKYLSRARSRFEERLHHSFPQSIATISNKYPAFSEIIKDLDNRPAHEVRIKLKELITHLESGVNLLEKIGSLGKIKPSTAKKIVSLKKMYPSWANDLDTLISTEDATELQQKLEQGTDLLNALHSLKVNHEVMYALTMQPSDRAALKARHDAALHFKKRNIVPIDYPGYMQRMTDILHLPDIAFEDSMASLAPLAFALAAASGRRQIEILITGEFDAKNKSIIKFSGQAKKRMAVSGGHYEIYSLIDSELFIQRLEFLRSHSSILRLQNLEIAHDEHRTELSVINGFVAKPLNDAAKQFFVDDRRVFKDTRAIYARIAYEKWFRTDPRWAKCDEDVFFSELLGHDDPDTQLAYKQFKLVNFNPKWTPNISDENPRLAALQELDNDMPGLARGDAAVRIHEWVKEQLAQNPAAKITAYQIKKNLNCRNDLASRYMAWCADALGVVIGDDGQARPEELPPSLVLDINADDTDAEEDEIEEDFTDEEIDDTEFDVSDNASDEDKPEDKPRFAAPIRRSEDSWLIKFEFAGKQYSWEGNAESVIDAMKQAWTENME.

4 residues coordinate DNA: Arg-270, Lys-295, Arg-376, and His-409. The Nucleophile role is filled by Tyr-418. Positions Asp-535–Ser-562 are enriched in acidic residues. The disordered stretch occupies residues Asp-535 to Ala-575. The span at Asp-563 to Ala-575 shows a compositional bias: basic and acidic residues.

It belongs to the Caudoviricetes Protelomerase family. In terms of assembly, monomer. Homodimer; in presence of DNA.

In terms of biological role, converts the circular intermediates produced by the viral replication and carrying a joined telomere site to a linear DNA molecule with covalently closed hairpin ends. The viral circular DNA is cleaved at a palindromic site called telRL thereby generating a linear prophage plasmid with telomeres. Binds covalently to the 3'-phosphoryl of the cleaved strands. In Yersinia enterocolitica (Bacteriophage PY54), this protein is Protelomerase (tel).